The sequence spans 706 residues: Serine/threonine-protein kinase BUR1 (706 aa).

The Protein kinase domain maps to 38–339; sequence YKPLGKIGEG…AIGGKNHAYF (302 aa). ATP-binding positions include 44-52 and Lys67; that span reads IGEGTFGEV. Asp168 serves as the catalytic Proton acceptor. Composition is skewed to basic and acidic residues over residues 360 to 523, 545 to 570, and 594 to 623; these read LDNH…RDSR, DYDRERDEDDRRRRPLPRDSSRDMTR, and DKVEDKGESHNKDDKPCDTENPRDSDKSRD. A disordered region spans residues 360 to 706; it reads LDNHKRREQE…YGRKRPRIER (347 aa). Pro residues predominate over residues 625-648; it reads GPPPGPPLPADGPPPPPSSNPPRP. A compositionally biased stretch (basic and acidic residues) spans 659 to 706; the sequence is WRRDSRDRRESRDRDGRDRDGRDRRLSSSRYARDEFDEYGRKRPRIER.

This sequence belongs to the protein kinase superfamily. CMGC Ser/Thr protein kinase family. CDC2/CDKX subfamily.

Its subcellular location is the nucleus. The enzyme catalyses L-seryl-[protein] + ATP = O-phospho-L-seryl-[protein] + ADP + H(+). It catalyses the reaction L-threonyl-[protein] + ATP = O-phospho-L-threonyl-[protein] + ADP + H(+). The catalysed reaction is [DNA-directed RNA polymerase] + ATP = phospho-[DNA-directed RNA polymerase] + ADP + H(+). In terms of biological role, serine/threonine-protein kinase involved in transcription regulation. Phosphorylates the UBC2/RAD6 ubiquitin-conjugating enzyme (E2), leading to monoubiquitination of histone H2B and the silencing of telomeric-associated genes. Also required for histone H3 methylation. Necessary for the recovery from pheromone-induced growth arrest in the cell cycle G1 phase. In Yarrowia lipolytica (strain CLIB 122 / E 150) (Yeast), this protein is Serine/threonine-protein kinase BUR1 (BUR1).